The sequence spans 91 residues: LYR motif-containing protein 4 (91 aa).

Pantetheine 4'-phosphate is bound by residues R6 and K44. K47 carries the post-translational modification N6-succinyllysine.

It belongs to the complex I LYR family. In terms of assembly, homodimer. Component of the mitochondrial core iron-sulfur cluster (ISC) complex composed of NFS1, LYRM4, NDUFAB1, ISCU, FXN, and FDX2; this complex is a heterohexamer containing two copies of each monomer. Component of the cyteine desulfurase complex composed of NFS1, LYRM4 and NDUFAB1; this complex contributes to the stability and cysteine desulfurase activity of NFS1. Interacts with FXN; this interaction is nickel-dependent. Interacts with the cytoplasmic form of NFS1; the complex increases the stability of NFS1. Forms a complex with the cytoplasmic form of NFS1; this complex increases the stability and cysteine desulfurase activity of NFS1. Interacts with NFS1. Component of a complex composed of FXN, NFS1, LYRM4 and ISCU.

Its subcellular location is the mitochondrion. The protein localises to the nucleus. Its pathway is cofactor biosynthesis; iron-sulfur cluster biosynthesis. Stabilizing factor, of the core iron-sulfur cluster (ISC) assembly complex, that regulates, in association with NDUFAB1, the stability and the cysteine desulfurase activity of NFS1 and participates in the [2Fe-2S] clusters assembly on the scaffolding protein ISCU. The core iron-sulfur cluster (ISC) assembly complex is involved in the de novo synthesis of a [2Fe-2S] cluster, the first step of the mitochondrial iron-sulfur protein biogenesis. This process is initiated by the cysteine desulfurase complex (NFS1:LYRM4:NDUFAB1) that produces persulfide which is delivered on the scaffold protein ISCU in a FXN-dependent manner. Then this complex is stabilized by FDX2 which provides reducing equivalents to accomplish the [2Fe-2S] cluster assembly. Finally, the [2Fe-2S] cluster is transferred from ISCU to chaperone proteins, including HSCB, HSPA9 and GLRX5. May also participates in the iron-sulfur protein biogenesis in the cytoplasm through its interaction with the cytoplasmic form of NFS1. This Mus musculus (Mouse) protein is LYR motif-containing protein 4.